We begin with the raw amino-acid sequence, 176 residues long: Protein SPMIP1 (176 aa).

The segment at threonine 55–proline 80 is disordered. Residues proline 61–proline 80 are compositionally biased toward pro residues.

In Homo sapiens (Human), this protein is Protein SPMIP1.